A 306-amino-acid chain; its full sequence is Mitochondrial glycine transporter (306 aa).

Solcar repeat units lie at residues 25–114 (QPVI…LKQY), 121–205 (PTAL…TKNV), and 217–301 (LVPV…MMAK). Transmembrane regions (helical) follow at residues 31–56 (FLCG…TRLQ), 89–115 (GMSP…KQYF), 127–152 (VILG…TRYE), 180–203 (GLTA…SQTK), 221–247 (VNFS…KTHM), and 276–294 (GSVP…AWTV).

Belongs to the mitochondrial carrier (TC 2.A.29) family. SLC25A38 subfamily.

It localises to the mitochondrion inner membrane. The enzyme catalyses glycine(in) = glycine(out). Functionally, mitochondrial glycine transporter that imports glycine into the mitochondrial matrix. Plays an important role in providing glycine for the first enzymatic step in heme biosynthesis, the condensation of glycine with succinyl-CoA to produce 5-aminolevulinate (ALA) in the mitochondrial matrix. Required during erythropoiesis. Plays a role as pro-apoptotic protein that induces caspase-dependent apoptosis. The sequence is that of Mitochondrial glycine transporter from Ovis aries (Sheep).